A 119-amino-acid polypeptide reads, in one-letter code: Large ribosomal subunit protein uL18 (119 aa).

Belongs to the universal ribosomal protein uL18 family. Part of the 50S ribosomal subunit; part of the 5S rRNA/L5/L18/L25 subcomplex. Contacts the 5S and 23S rRNAs.

In terms of biological role, this is one of the proteins that bind and probably mediate the attachment of the 5S RNA into the large ribosomal subunit, where it forms part of the central protuberance. The sequence is that of Large ribosomal subunit protein uL18 from Xanthomonas axonopodis pv. citri (strain 306).